The chain runs to 3974 residues: MKEQSQKIAIIGSACRFPGGATSPSKLWQQLVQPQDLLRPVPRDRFALSTYHNHDGTKPGATNVTNKAYLLDEDPMEFDASFFSISPAEAQGMDPQQRQLLEVTYEALESAGYGLSKVSGSSTGVYVGSSGADYRDIQNRDLDTLGRWHATGTASSILANRISHFYGLCGPSLTLDTACSSSLVGLHLAVQAIRNGDCEQALVAGSNLILDPTPYISGSRLKLFSPDAQCRMWDESGKGYGRGEGVAVVLLKPLVNALLDGDHVEAVIRETGVNQDGHTPGITMPSAEAQTNLIRHVYAKAGLDPRVTAPQFFEAHGTGTAAGDPVEARAIYESFFGDGKTVTNQAGAPKLNVGSIKTVIGHLEGAAGIAGLLKATLALQHAHIPPNLLFKKPNPALVPYLDALEVPVTAKQWPAVEEGTPRLASVNSFGFGGTNAHCLIESFPQDDSHPTGKRGLGRQESEETCIGPVVLSAQSGRSLMSAMKVLASYIESNPGARLRDLLHTLGRRRSKLSVRTFFVATSRQELISQLRHSAENVKDATGFGFRPPARLVGGSQGVLGIFTGQGAQWATMGRVLYQRCGQFRASIERCQAALDALPDGPQWSIAEEMLKTKQASRLSEAAVSQPLCTALQIALVDLIELAGLRFDAVVGHSSGEIAACYYMGLITSRDAICIAYYRGVHSSLAEGTNGQKGAMMAVSMTHNESNEFCSRPDFQGRIHIAAHNAPSSVTLSGDADAIFRAQKELAGAGIFARVLKVDTAYHSDQMLPCVAPYLQSLESLNIPIREPRSDCIWVSSVRPDSFDSSSSLNLEEMRSQYWLDNMVQPVLFAPAIAKALRQHGSSFDMAVEIGPHPALAAPAKDTIMEFSGTVPLYTGILERGLDDVHASSTAIALIWQQMTDDNIDVATYAEAFDVTGDPPAKLLKGLPSYEWDHKPYWRESRISRTIRRRENDSHPLLGSRLSADARNEFRWRNILRLVDVPWLSGHVFQDKTMLPLAAQVSMVIDACSLAFPQSSVESIDITDLEISRDILVEAEGPETELLSTLRVVDRNTTADGTTSISAAWSCHVSHDSELGIPESVCICQVQFSFGSGLAASLPRRVSDPSTTTPISSAKIYESFDHDGLQYSGLFNRLSSVSQALGFASASASWTCDELQDHKLHPAVLDVGFQLLMPATFSQKAENACGPYLPRSVACISLRRGFASLKTGEGLSLAIDAFSAVEESSNVLGDVAFYSASGECVIQVESVKLVPVITPDASNDRRIFTKDVWIEDTFDLSPYACDQDLEDDTGHLAGLVDRLCLYYCRQALDNMCGAVTLLSPLRLLHEELQAVIEAVKSGNHISLAAEYAEDSYDSLMEECLPYHDHKALKRVHELGQNLVKIMQGTTSSPRLRGARLDYPWNTELRNAIAILGHRITQKHPNMNILEIGNGDSGMTAHILQSIGTAYLSYTCASPRSMLSQSSPVDVLGNVELKSMNILQEPERQGFDRHKYDLLISSAPIHGDAAFQTALSNMRTLLRPGGYLLLVAKTGTNLLTTLTLGTSVVSGLESIEESNTPAGKSPSELDSLLLACEFSGLEQIVQDSPHVLTNAYSLIASHAASHMFNLVHNPRPSMAQIIDERARILLIGGRSLATARLVRDVRKMLSEVTPHIVFVDSIEKLEALPIEDDFDCLCFNDLDQPLFAGRRNAKTLEYLQKLYGNVRNLLWYTSGRIHKPEASMSIGVGRSLCGDAPWHNSQFIDVSSAAKVTAHSVVEAYCRLALAPTIASSNENLLWSVEPELVIQGDRTLISRVVENRSINDRFNATRRPILREAKYSEIEVCLKQDPQGQVQLAQYIPVQTIAHNAGLCRIRVKYTAALVAADAAKAALCFGHRVGTETPVFAITKQAGSLVVTPEAATLVCENETIDPVHNLSSMALYIQAAICASRAAQEGRTLLFGVREDVIGAVQTSPLWKDKPVIIVVIDSDDRQCADGVIFLHPMSTRRAIRKKLSQQIDMALDCSSFGHDQLWSRVISTLQCRHEKLTAVDFFAESSLSSLQGWLQEAHVAAPQMWHPQPEARAFDILPIQSIGQEGSSSQISSAIVAWQATENFTYRVAGLESEKLFSDSKTYFLAGMTDSLGLSISAWMIRSGAKHLVLAGRDPTIPPQWLEEMSSLGANIKVLTVDICQKVMLTKAVKEIQAHMPPIAGVCNATLVLSDGLLADETFESFDRTLKAKIDGSRNLDQVFSEPSLAFFVLFGSMVSVTGNSGQADYHAANLYMSSLVNHRRSRGLAASIMDTGVVTDVGLVQQGGDAVATMARRQYVEPISEATLHHWVGEAVLASPVSSGEESRIVVGPKRVPRTLDPDLRPAWYSNPRFSHFLIDDASPTSSDSQGSASLLERLQLAASEDHMLAILMEAAQAKLEALLGMEHGAVAAGGAGSLLSFGVDSGVALQASNWLAQEVHVRMPVMKLLTTPNLKQLCLDVMRNMATDLPRCSAKETAIGGTVMSVRAGRSASPGASCSDRSLSTRSDETRSIRTPALASSLQDSFVHTGASTPIDTLTSADSLHSATASGSAKGAPLSPGQAQLWAATIQSGNDTRYNFTLQFDVEGAIDVDRLRSALVSLIAQQEMLRCSFVEVSAGEVQQRVWPGKDLSRCFKHLPPGDLRRAEEEYERLSQHCWQLSEGDTFMLVLTNGPADKHVITLAAHHIIMDGMSIAMFFRLLALAYEGQHLPVLQRAYTAYAEEHVAELAADRLDDKLEFWKTCLSPLVPTMPVFPMAISGVRKALDDGDTGILTVKSSISAPVVDRIKSMGRKLRCTPFHFMTTALIVLCAKMLHLKDICIGVTDAGRLDERDGETVGHFADILPLRTRVEPGTSMADLVPIVLHNIAQAAENAGVPFSSIVRATKTPRSATHSPIFQVGFNFLPGDARTQFGASTMQWRTGNLAQSLNDVSWWVHARDDGSYTMQVDGRSDLYSLDGLDLLMQTYKDLAETLCTEPNTNLERLRTSSDQAIKAADEAGLGQAKDFGWETTLPDRFDAMAEKYFDQRAAVDSAGGVTYEELRHRVHDIAAALQDSGSAPGAAVAVITGPSVNTLASMLAIIRIRCVYVPLDLSLPHARHTAMIKDCGARVLLFEDSTAERASALRMDGMEVVNVFELLTVGRTQREVSNLSDPHEPAILLYTSGSTSVPKGVVLSQAGFLNYVAAKTAFLGLEREMVLQQSSISFDMGLAQMLHSFCNGGTLVIVPQHARGDPVATAQIMLAHHITFTVATPTEYTAWLSTSSHTIDQYDQWRHVCYGGEFVTDRLSAMFRQLQRQKPLLNNSYGPTETSCATTLCVMSEKGSPAMIGYVGKPLANSRIRIVDQDGQPLPLGHAGEICIGGPGLAVRYVNPDDTRNRFIMQQEVSSSSQASTQAPRRLYRTGDRGKLLVDGSLILLGRMEGDTQVKMHGLRIDVTEVEHALLNAIPDFLAEAIVTMRGAADNAFLVAHVVMSAGITASKGELQLLTRLLRLPRYMLPKSIIAVDGLPTTTSGKIDRRAISQLPLEAPGSKKTSADQLVEAEVLRIWREVLGEEAHLDSESDFFSVGGDSLLVIKLQAGIKALMGLSISLAELYETSTLREMAEKMASVRRTQPKPSLIDWDAEVQVPTPIAKLAAAARPDDHAESAATSGTEVVLTGAADLLGYEILVALLNEPSVRVIHCVAIAEGHGARLPSDARVVVYPGSLRHPTLSLSDEERSNLQDRAHAIIHAGAEGHCLNNYATLRSANLLSTQFLAQIALPRCLPVHFVSGTRVTLLSGTSSLPPLSVASYRPAQHGHDGYTATKWASEVFFEALTRLSPALPVTIHRPCALTGMNAAPDNVMNALVRCSAAIKAVPRNDEAEGYVDFKDARTVAHDMVEQVLAGLGHDPQRACSAGVRFIHHSSGHKVPARDLGRRMEMLYGGTFRKLEMGEWIALAKASAGLHYLAATFLEAMMDKHVTSVYPYMGEEI.

In terms of domain architecture, Ketosynthase family 3 (KS3) spans 5–442; sequence SQKIAIIGSA…GTNAHCLIES (438 aa). Catalysis depends on for beta-ketoacyl synthase activity residues C179, H316, and H362. Residues 561 to 883 form a malonyl-CoA:ACP transacylase (MAT) domain region; it reads IFTGQGAQWA…TGILERGLDD (323 aa). The N-terminal hotdog fold stretch occupies residues 954 to 1079; the sequence is HPLLGSRLSA…HDSELGIPES (126 aa). Residues 954 to 1251 form a dehydratase (DH) domain region; sequence HPLLGSRLSA…QVESVKLVPV (298 aa). The region spanning 954 to 1257 is the PKS/mFAS DH domain; it reads HPLLGSRLSA…LVPVITPDAS (304 aa). H986 serves as the catalytic Proton acceptor; for dehydratase activity. Residues 1107-1257 are C-terminal hotdog fold; that stretch reads TTPISSAKIY…LVPVITPDAS (151 aa). Catalysis depends on D1165, which acts as the Proton donor; for dehydratase activity. Positions 1398–1529 are methyltransferase (MT) domain; it reads PWNTELRNAI…GYLLLVAKTG (132 aa). The tract at residues 2108–2282 is ketoreductase (KR) domain; it reads TYFLAGMTDS…ASIMDTGVVT (175 aa). The tract at residues 2492-2516 is disordered; it reads AGRSASPGASCSDRSLSTRSDETRS. Residues 2498 to 2509 are compositionally biased toward polar residues; sequence PGASCSDRSLST. The condensation (C) domain stretch occupies residues 2560–2994; it reads APLSPGQAQL…LERLRTSSDQ (435 aa). The interval 3021-3423 is adenylation (A) (KR) domain; it reads DAMAEKYFDQ…DGSLILLGRM (403 aa). The Carrier domain occupies 3537–3613; that stretch reads SADQLVEAEV…EMAEKMASVR (77 aa). Position 3573 is an O-(pantetheine 4'-phosphoryl)serine (S3573). Positions 3657–3940 are reductase (RED) domain; it reads VVLTGAADLL…KLEMGEWIAL (284 aa).

The protein in the C-terminal section; belongs to the NRP synthetase family.

It functions in the pathway secondary metabolite biosynthesis. In terms of biological role, hybrid PKS-NRPS synthetase; part of the hps1-dma1 gene cluster that probably mediates the biosynthesis a derivative of cyclopiazonic acid (CPA). The hybrid polyketide synthase-nonribosomal peptide synthetase (PKS-NRPS) nps1 might incorporates acetyl-CoA, malonyl-CoA, and tryptophan (Trp) and utilizes a C-terminal redox-incompetent reductase domain to make and release the tryptophan tetramic acid, cyclo-acetoacetyl-L-tryptophan (c-AATrp), as the first intermediate in the pathway. In addition, the cluster also includes the tryptophan dimethylallyltransferase dma1, the FAD-dependent oxidoreductase toxD, the cytochrome P450 monooxygenase cyp3.1 and the methyltransferase DOTSEDRAFT_139328; the latter 2 being not present in all CPA-producing fungi but involved in additional modifications that occur in biosynthesis the of a range of CPA and CPA-like products. Further studies are required to clarify whether the CPA-like hps1-dma1 cluster is functional or a non-functional relic reflecting evolution of D.septosporum. The chain is Hybrid PKS-NRPS synthetase 1 from Dothistroma septosporum (strain NZE10 / CBS 128990) (Red band needle blight fungus).